Here is a 173-residue protein sequence, read N- to C-terminus: Endoribonuclease YbeY (173 aa).

Zn(2+) contacts are provided by histidine 120, histidine 124, and histidine 130.

The protein belongs to the endoribonuclease YbeY family. Zn(2+) serves as cofactor.

It localises to the cytoplasm. In terms of biological role, single strand-specific metallo-endoribonuclease involved in late-stage 70S ribosome quality control and in maturation of the 3' terminus of the 16S rRNA. This is Endoribonuclease YbeY from Kineococcus radiotolerans (strain ATCC BAA-149 / DSM 14245 / SRS30216).